The sequence spans 216 residues: RNA pyrophosphohydrolase (216 aa).

Residues 6-149 enclose the Nudix hydrolase domain; sequence GFRPNVGIIL…KRDVYQLALT (144 aa). A Nudix box motif is present at residues 38–59; it reads GGIKYGETPMQAMYRELHEETG. Residues 159–188 form a disordered region; the sequence is AQRTDKSRGPRAPRYPRVANGHAASEAPAA.

This sequence belongs to the Nudix hydrolase family. RppH subfamily. A divalent metal cation is required as a cofactor.

Accelerates the degradation of transcripts by removing pyrophosphate from the 5'-end of triphosphorylated RNA, leading to a more labile monophosphorylated state that can stimulate subsequent ribonuclease cleavage. The protein is RNA pyrophosphohydrolase of Burkholderia mallei (strain NCTC 10247).